A 143-amino-acid chain; its full sequence is Mini-ribonuclease 3 (143 aa).

Residue D23 is part of the active site.

Belongs to the MrnC RNase family. In terms of assembly, homodimer. Requires Mg(2+) as cofactor.

It is found in the cytoplasm. Involved in correct processing of both the 5' and 3' ends of 23S rRNA precursor. Processes 30S rRNA precursor transcript even in absence of ribonuclease 3 (Rnc); Rnc processes 30S rRNA into smaller rRNA precursors. Cleaves more efficiently on assembled 50S ribosomal subunits. Cleavage is strongly stimulated by ribosomal protein L3 (RplC); 20-30% DMSO can replace RplC, suggesting RplC may alter rRNA conformation. The polypeptide is Mini-ribonuclease 3 (mrnC) (Bacillus subtilis (strain 168)).